We begin with the raw amino-acid sequence, 658 residues long: Interferon-induced GTP-binding protein Mx1 (658 aa).

Residue Met1 is modified to N-acetylmethionine. The interval 1 to 20 (MVNSKGKITDSDPGSSHLLL) is disordered. Positions 65-338 (DLALPAIAVI…LITHICKTLP (274 aa)) constitute a Dynamin-type G domain. The tract at residues 75-82 (GDQSSGKS) is G1 motif. 75-82 (GDQSSGKS) is a GTP binding site. A G2 motif region spans residues 100-102 (VTR). The interval 176 to 179 (DLPG) is G3 motif. GTP-binding positions include 176 to 180 (DLPGI) and 245 to 248 (TKPD). The interval 245–248 (TKPD) is G4 motif. Positions 277-280 (KCRG) are G5 motif. The bundle signaling element (BSE) stretch occupies residues 339 to 364 (LLENQIKENYEKITEELQKYGSDVPE). The interval 364–531 (EEEHEKMFFL…HFQMEQIVYC (168 aa)) is middle domain. The stalk stretch occupies residues 365–628 (EEHEKMFFLI…KDTHNWLLKE (264 aa)). Residues 551–554 (KDRK) form a critical for lipid-binding region. The region spanning 570–658 (LSDIFEHLLA…ARRRLAKFPG (89 aa)) is the GED domain.

Belongs to the TRAFAC class dynamin-like GTPase superfamily. Dynamin/Fzo/YdjA family. As to quaternary structure, homooligomer. Oligomerizes into multimeric filamentous or ring-like structures by virtue of its stalk domain. Oligomerization is critical for GTPase activity, protein stability, and recognition of viral target structures. Interacts with TRPC1, TRPC3, TRPC4, TRPC5, TRPC6 and TRPC7. Interacts with HSPA5. Interacts with TUBB/TUBB5. Interacts with DDX39A and DDX39B. In terms of processing, ISGylated.

Its subcellular location is the cytoplasm. It localises to the endoplasmic reticulum membrane. The protein localises to the perinuclear region. In terms of biological role, interferon-induced dynamin-like GTPase with antiviral activity. This Eumetopias jubatus (Steller sea lion) protein is Interferon-induced GTP-binding protein Mx1 (MX1).